The primary structure comprises 445 residues: Exodeoxyribonuclease 7 large subunit (445 aa).

Belongs to the XseA family. Heterooligomer composed of large and small subunits.

The protein localises to the cytoplasm. It carries out the reaction Exonucleolytic cleavage in either 5'- to 3'- or 3'- to 5'-direction to yield nucleoside 5'-phosphates.. Functionally, bidirectionally degrades single-stranded DNA into large acid-insoluble oligonucleotides, which are then degraded further into small acid-soluble oligonucleotides. The polypeptide is Exodeoxyribonuclease 7 large subunit (Geotalea daltonii (strain DSM 22248 / JCM 15807 / FRC-32) (Geobacter daltonii)).